The chain runs to 517 residues: Ribonuclease Y (517 aa).

A helical transmembrane segment spans residues 3-23; sequence AILYVIVAVIALILGGAAGVA. Residues 207 to 292 form the KH domain; it reads TVTVVSLPND…EMVEKAQKEV (86 aa). One can recognise an HD domain in the interval 333–426; sequence VLKHSIEVAH…VAAADAISAA (94 aa).

The protein belongs to the RNase Y family.

The protein localises to the cell membrane. In terms of biological role, endoribonuclease that initiates mRNA decay. The polypeptide is Ribonuclease Y (Symbiobacterium thermophilum (strain DSM 24528 / JCM 14929 / IAM 14863 / T)).